The following is an 890-amino-acid chain: Translation initiation factor IF-2 (890 aa).

The disordered stretch occupies residues Leu-45 to Gln-304. The span at Ser-67–Val-81 shows a compositional bias: polar residues. The segment covering Val-92–Asp-217 has biased composition (basic and acidic residues). Residues Gly-252–Asn-266 are compositionally biased toward basic residues. Over residues Lys-267–Ala-280 the composition is skewed to basic and acidic residues. Residues Pro-389–Lys-558 form the tr-type G domain. The tract at residues Gly-398–Thr-405 is G1. Gly-398 to Thr-405 serves as a coordination point for GTP. The G2 stretch occupies residues Gly-423–His-427. Positions Asp-444–Gly-447 are G3. GTP is bound by residues Asp-444–His-448 and Asn-498–Asp-501. Residues Asn-498–Asp-501 form a G4 region. The G5 stretch occupies residues Ser-534–Lys-536. At Lys-808 the chain carries N6-acetyllysine.

This sequence belongs to the TRAFAC class translation factor GTPase superfamily. Classic translation factor GTPase family. IF-2 subfamily.

It localises to the cytoplasm. Its function is as follows. One of the essential components for the initiation of protein synthesis. Protects formylmethionyl-tRNA from spontaneous hydrolysis and promotes its binding to the 30S ribosomal subunits. Also involved in the hydrolysis of GTP during the formation of the 70S ribosomal complex. This is Translation initiation factor IF-2 from Escherichia coli O81 (strain ED1a).